A 416-amino-acid chain; its full sequence is Serine/threonine-protein kinase 26 (416 aa).

Ala2 is subject to N-acetylalanine. Ser4 is modified (phosphoserine). A Protein kinase domain is found at 24 to 274; the sequence is FTKLERIGKG…AKELLKHKFI (251 aa). ATP is bound by residues 30–38 and Lys53; that span reads IGKGSFGEV. The active-site Proton acceptor is the Asp144. Thr178 carries the phosphothreonine; by autocatalysis modification. The segment at 296–343 is disordered; that stretch reads AEGHSDEESDSEGSDSESSSRESNPHPEWSFTTVRKKPDPKKLQNGEE. Phosphoserine is present on residues Ser300, Ser304, Ser306, Ser309, and Ser325. 2 positions are modified to phosphothreonine: Thr327 and Thr328. Residues 331 to 340 show a composition bias toward basic and acidic residues; sequence KKPDPKKLQN.

This sequence belongs to the protein kinase superfamily. STE Ser/Thr protein kinase family. STE20 subfamily. In terms of assembly, homodimer. Interacts with PDCD10. Interacts with GOLGA2. Interacts with CTTNBP2NL. Interacts with RIPOR1 (via C-terminus); this interaction occurs in a PDCD10-dependent and Rho-independent manner. Interacts with PDCD10; this interaction is required for the association of STK26 with RIPOR1. Part of the core of STRIPAK complexes composed of PP2A catalytic and scaffolding subunits, the striatins (PP2A regulatory subunits), the striatin-associated proteins MOB4, STRIP1 and STRIP2, PDCD10 and members of the STE20 kinases, such as STK24 and STK26. Mg(2+) serves as cofactor.

The protein resides in the cytoplasm. It localises to the golgi apparatus. The enzyme catalyses L-seryl-[protein] + ATP = O-phospho-L-seryl-[protein] + ADP + H(+). The catalysed reaction is L-threonyl-[protein] + ATP = O-phospho-L-threonyl-[protein] + ADP + H(+). With respect to regulation, interaction with Golgi matrix protein GOLGA2 leads to autophosphorylation on Thr-178, possibly as a consequence of stabilization of dimer formation. May also be activated by C-terminal cleavage. Its function is as follows. Serine/threonine-protein kinase that acts as a mediator of cell growth. Modulates apoptosis. In association with STK24 negatively regulates Golgi reorientation in polarized cell migration upon RHO activation. Phosphorylates ATG4B at 'Ser-383', thereby increasing autophagic flux. Part of the striatin-interacting phosphatase and kinase (STRIPAK) complexes. STRIPAK complexes have critical roles in protein (de)phosphorylation and are regulators of multiple signaling pathways including Hippo, MAPK, nuclear receptor and cytoskeleton remodeling. Different types of STRIPAK complexes are involved in a variety of biological processes such as cell growth, differentiation, apoptosis, metabolism and immune regulation. The sequence is that of Serine/threonine-protein kinase 26 from Mus musculus (Mouse).